Consider the following 436-residue polypeptide: tRNA-2-methylthio-N(6)-dimethylallyladenosine synthase (436 aa).

The MTTase N-terminal domain occupies 5-121 (RKLFIKTYGC…LPDMLDRTEG (117 aa)). 6 residues coordinate [4Fe-4S] cluster: Cys-14, Cys-50, Cys-84, Cys-158, Cys-162, and Cys-165. Residues 144 to 374 (ATRGPAAFLT…TEQQRAAQMA (231 aa)) enclose the Radical SAM core domain. The TRAM domain occupies 373–435 (MAMVGREVGV…PNSLAGERLG (63 aa)).

Belongs to the methylthiotransferase family. MiaB subfamily. In terms of assembly, monomer. [4Fe-4S] cluster is required as a cofactor.

It is found in the cytoplasm. It carries out the reaction N(6)-dimethylallyladenosine(37) in tRNA + (sulfur carrier)-SH + AH2 + 2 S-adenosyl-L-methionine = 2-methylsulfanyl-N(6)-dimethylallyladenosine(37) in tRNA + (sulfur carrier)-H + 5'-deoxyadenosine + L-methionine + A + S-adenosyl-L-homocysteine + 2 H(+). Catalyzes the methylthiolation of N6-(dimethylallyl)adenosine (i(6)A), leading to the formation of 2-methylthio-N6-(dimethylallyl)adenosine (ms(2)i(6)A) at position 37 in tRNAs that read codons beginning with uridine. The polypeptide is tRNA-2-methylthio-N(6)-dimethylallyladenosine synthase (Cereibacter sphaeroides (strain ATCC 17029 / ATH 2.4.9) (Rhodobacter sphaeroides)).